An 84-amino-acid polypeptide reads, in one-letter code: Exodeoxyribonuclease 7 small subunit (84 aa).

It belongs to the XseB family. As to quaternary structure, heterooligomer composed of large and small subunits.

The protein resides in the cytoplasm. The enzyme catalyses Exonucleolytic cleavage in either 5'- to 3'- or 3'- to 5'-direction to yield nucleoside 5'-phosphates.. In terms of biological role, bidirectionally degrades single-stranded DNA into large acid-insoluble oligonucleotides, which are then degraded further into small acid-soluble oligonucleotides. The polypeptide is Exodeoxyribonuclease 7 small subunit (Yersinia pseudotuberculosis serotype O:3 (strain YPIII)).